The sequence spans 407 residues: Patatin-like protein 2 (407 aa).

The PNPLA domain maps to 22-228 (LSIDGGGIRG…AANNPALLAI (207 aa)). A GXGXXG motif is present at residues 26–31 (GGGIRG). The GXSXG signature appears at 64–68 (GTSTG). The active-site Nucleophile is the serine 66. Residue aspartate 215 is the Proton acceptor of the active site. The DGA/G signature appears at 215–217 (DGG). Serine 398 is modified (phosphoserine).

Belongs to the patatin family. As to expression, expressed specifically in roots.

Its subcellular location is the cytoplasm. Functionally, possesses non-specific lipolytic acyl hydrolase (LAH) activity. Catalyzes the hydrolysis of the galactolipids monogalactosyldiacylglycerol (MGDG) and digalactosyldiacylglycerol (DGDG), and less efficiently the phoshpolipids phosphatidylcholine (PC), phosphatidylethanolamine (PE), phosphatidylglycerol (PG), phosphatidic acid (PA), phosphatidylserine (PS) and phosphatidylinositol (PI). Favors the release of fatty acid at the sn-1 position for PC or PE and the sn-2 position for PG, PA, PS and PI. Negatively affects disease resistance to the necrotic fungal pathogen Botrytis cinerea and the avirulent bacteria Pseudomonas syringae by promoting cell death and reducing the efficiency of the hypersensitive response, respectively. However, PLP2 contributes to resistance to cucumber mosaic virus (CMV), an obligate parasite inducing hypersensitive response. May negatively regulate oxylipin production, possibly via participating in membrane repair that includes removal of oxidatively modified lipids. This Arabidopsis thaliana (Mouse-ear cress) protein is Patatin-like protein 2 (PLP2).